Reading from the N-terminus, the 1445-residue chain is CD109 antigen (1445 aa).

The N-terminal stretch at 1 to 21 (MQGPPLLTAAHLLCVCTAALA) is a signal peptide. 8 N-linked (GlcNAc...) asparagine glycosylation sites follow: asparagine 68, asparagine 118, asparagine 247, asparagine 279, asparagine 365, asparagine 419, asparagine 513, and asparagine 645. Positions 593 to 702 (DKSVNLMNAS…TWIWLDTNMG (110 aa)) are bait region (approximate). Positions 921-924 (CGEQ) form a cross-link, isoglutamyl cysteine thioester (Cys-Gln). N-linked (GlcNAc...) asparagine glycans are attached at residues asparagine 1086 and asparagine 1355. The GPI-anchor amidated alanine moiety is linked to residue alanine 1420. Positions 1421-1445 (SGSHHHSSVIFIFCFKLLYFMELWL) are cleaved as a propeptide — removed in mature form.

Belongs to the protease inhibitor I39 (alpha-2-macroglobulin) family. Heterodimer; disulfide-linked. Interacts with TGFB1 and TGFBR1. Forms a heteromeric complex with TGFBR1, TGFBR2 and TGFBR3 in a ligand-independent manner. In terms of processing, N-glycosylated. Post-translationally, 2 forms of 150 (p150) and 120 kDa (p120) exist due to proteolytic degradation from a 180 kDa form. In terms of tissue distribution, widely expressed with high level in uterus, aorta, heart, lung, trachea, placenta and in fetal heart, kidney, liver, spleen and lung. Expressed by CD34(+) acute myeloid leukemia cell lines, T-cell lines, activated T-lymphoblasts, endothelial cells and activated platelets. Isoform 4 is expressed in placenta. Isoform 1 is expressed in keratinocytes and placenta.

The protein localises to the cell membrane. Modulates negatively TGFB1 signaling in keratinocytes. This is CD109 antigen (CD109) from Homo sapiens (Human).